A 391-amino-acid chain; its full sequence is Esterase (391 aa).

The N-terminal stretch at 1–26 (MEFPETNNNPIITLSFLLCMLSLAYA) is a signal peptide. Catalysis depends on S41, which acts as the Nucleophile. N-linked (GlcNAc...) asparagine glycans are attached at residues N186, N193, and N313. Catalysis depends on residues D347 and H350.

It belongs to the 'GDSL' lipolytic enzyme family. In terms of processing, the N-terminus is blocked. Post-translationally, glycosylated.

Has lipase and esterase activities. May be involved in plant defense. This is Esterase from Hevea brasiliensis (Para rubber tree).